The following is a 365-amino-acid chain: Galactoside alpha-(1,2)-fucosyltransferase 1 (365 aa).

Residues 1-8 (MWPLSHRH) are Cytoplasmic-facing. Residues 9–25 (LCLAFLLVCVLSAISFF) traverse the membrane as a helical; Signal-anchor for type II membrane protein segment. Topologically, residues 26-365 (LHLYQDSIRH…LSPLWTLAEP (340 aa)) are lumenal. N-linked (GlcNAc...) asparagine glycosylation is found at Asn65, Asn301, and Asn327.

The protein belongs to the glycosyltransferase 11 family.

It localises to the golgi apparatus. It is found in the golgi stack membrane. It catalyses the reaction a beta-D-galactosyl-(1-&gt;4)-N-acetyl-beta-D-glucosaminyl derivative + GDP-beta-L-fucose = an alpha-L-Fuc-(1-&gt;2)-beta-D-Gal-(1-&gt;4)-beta-D-GlcNAc derivative + GDP + H(+). It carries out the reaction a ganglioside GA1 + GDP-beta-L-fucose = a ganglioside Fuc-GA1 + GDP + H(+). The catalysed reaction is a beta-D-Gal-(1-&gt;3)-beta-D-GlcNAc-(1-&gt;3)-beta-D-Gal-(1-&gt;4)-beta-D-Glc-(1&lt;-&gt;1')-Cer(d18:1(4E)) + GDP-beta-L-fucose = alpha-L-fucosyl-(1-&gt;2)- beta-D-galactosyl-(1-&gt;3)-N-acetyl-beta-D-glucosaminyl-(1-&gt;3)-beta-D-galactosyl-(1-&gt;4)-beta-D-glucosyl-(1&lt;-&gt;1')-N-acylsphing-4-enine + GDP + H(+). The enzyme catalyses a neolactoside nLc4Cer(d18:1(4E)) + GDP-beta-L-fucose = a neolactoside IV(2)-alpha-Fuc-nLc4Cer(d18:1(4E)) + GDP + H(+). It catalyses the reaction a ganglioside GM1 + GDP-beta-L-fucose = a ganglioside Fuc-GM1 + GDP + H(+). It carries out the reaction beta-D-galactosyl-(1-&gt;3)-N-acetyl-D-galactosamine + GDP-beta-L-fucose = alpha-L-fucosyl-(1-&gt;2)-beta-D-galactosyl-(1-&gt;3)-N-acetyl-D-galactosamine + GDP + H(+). Its pathway is protein modification; protein glycosylation. Functionally, catalyzes the transfer of L-fucose, from a guanosine diphosphate-beta-L-fucose, to the terminal galactose residue of glycoconjugates through an alpha(1,2) linkage leading to H antigen synthesis that is an intermediate substrate in the synthesis of ABO blood group antigens. H antigen is essential for maturation of the glomerular layer of the main olfactory bulb, in cell migration and early cell-cell contacts during tumor associated angiogenesis. Preferentially fucosylates soluble lactose and to a lesser extent fucosylates glycolipids gangliosides GA1 and GM1a. This is Galactoside alpha-(1,2)-fucosyltransferase 1 from Leontopithecus chrysomelas (Golden-headed lion tamarin).